Reading from the N-terminus, the 326-residue chain is Tagatose 1,6-diphosphate aldolase (326 aa).

This sequence belongs to the aldolase LacD family.

The catalysed reaction is D-tagatofuranose 1,6-bisphosphate = D-glyceraldehyde 3-phosphate + dihydroxyacetone phosphate. The protein operates within carbohydrate metabolism; D-tagatose 6-phosphate degradation; D-glyceraldehyde 3-phosphate and glycerone phosphate from D-tagatose 6-phosphate: step 2/2. This Staphylococcus aureus (strain bovine RF122 / ET3-1) protein is Tagatose 1,6-diphosphate aldolase.